A 194-amino-acid chain; its full sequence is UPF0232 protein MSMEG_0004/MSMEI_0006 (194 aa).

The segment covering 1-14 (MTGPFDDDGPEEDA) has biased composition (acidic residues). The segment at 1 to 81 (MTGPFDDDGP…GPGPDARDPQ (81 aa)) is disordered. Residues 30-52 (DLVRRTLEEARGAARSQGKDVGR) show a composition bias toward basic and acidic residues.

Belongs to the UPF0232 family.

This is UPF0232 protein MSMEG_0004/MSMEI_0006 from Mycolicibacterium smegmatis (strain ATCC 700084 / mc(2)155) (Mycobacterium smegmatis).